The chain runs to 734 residues: Photosystem I P700 chlorophyll a apoprotein A2 (734 aa).

The next 8 helical transmembrane spans lie at 46–69 (IFASHFGQLAIIFLWTSGNLFHVA), 135–158 (LYTGALFLLLISAISLIAGWLHLQ), 175–199 (LNHHLSGLFGVSSLAWTGHLVHVAI), 273–291 (MAHHHLAIAFLFLIAGHMY), 330–353 (LHFQLGLALASLGVITSLVAQHMY), 369–395 (AALYTHHQYIAGFIMTGAFAHGAIFFI), 417–439 (AIISHLSWASLFLGFHTLGLYVH), and 517–535 (FLVHHAIALGLHTTTLILV). [4Fe-4S] cluster is bound by residues C559 and C568. The next 2 helical transmembrane spans lie at 575-596 (AFYLAVFWMLNTIGWVTFYWHW) and 643-665 (LSVWAWMFLFGHLVWATGFMFLI). Residues H654, M662, and Y670 each contribute to the chlorophyll a site. W671 lines the phylloquinone pocket. The helical transmembrane segment at 707 to 727 (LVGLAHFSVGYIFTYAAFLIA) threads the bilayer.

It belongs to the PsaA/PsaB family. As to quaternary structure, the PsaA/B heterodimer binds the P700 chlorophyll special pair and subsequent electron acceptors. PSI consists of a core antenna complex that captures photons, and an electron transfer chain that converts photonic excitation into a charge separation. The eukaryotic PSI reaction center is composed of at least 11 subunits. P700 is a chlorophyll a/chlorophyll a' dimer, A0 is one or more chlorophyll a, A1 is one or both phylloquinones and FX is a shared 4Fe-4S iron-sulfur center. is required as a cofactor.

The protein resides in the plastid. The protein localises to the chloroplast thylakoid membrane. It carries out the reaction reduced [plastocyanin] + hnu + oxidized [2Fe-2S]-[ferredoxin] = oxidized [plastocyanin] + reduced [2Fe-2S]-[ferredoxin]. PsaA and PsaB bind P700, the primary electron donor of photosystem I (PSI), as well as the electron acceptors A0, A1 and FX. PSI is a plastocyanin-ferredoxin oxidoreductase, converting photonic excitation into a charge separation, which transfers an electron from the donor P700 chlorophyll pair to the spectroscopically characterized acceptors A0, A1, FX, FA and FB in turn. Oxidized P700 is reduced on the lumenal side of the thylakoid membrane by plastocyanin. The sequence is that of Photosystem I P700 chlorophyll a apoprotein A2 from Lactuca sativa (Garden lettuce).